We begin with the raw amino-acid sequence, 615 residues long: MASNVFDHPLQELEGEDNGVKSEKASLLETSGSVDTTPEDSGHRSSDGHRGLDHCETAPVGLYGDMLINDSEIQYSRSLTEKGSPAIHNLKLDRLSEQEKQKLIVELVRIQNDGTVEVIDNGTPVSELWEFEPTKGQSTITYEKSLTESFRSIPRLKIAILVVGTRGDVQPFLAMAKRLQEFGHRVRLATHANFRSFVRAAGVEFYPLGGDPRELAAYMARNKGLIPSGPSEISKQRKQLKAIIESLLPACIEPDLETATSFRAQAIIANPPAYGHVHVAEALGVPIHIFFTMPWTPTNEFPHPLARVPQSAAYWLSYIVVDLMVWWSIRTYINDFRKRKLNLAPIAYFSTYHGSISHLPTGYMWSPHVVPKPSDWGPLVDVVGYCFLNLGSKYQPREEFLHWIERGSPPVYIGFGSMPLDDPKQTMDIILETLKDTEQRGIVDRGWGGLGNLATEVPENVFLVEDCPHDWLFPQCSAVVHHGGAGTTATGLKAGCPTTIVPFFGDQFFWGDRIYEKGLGPAPIPIAQLSVENLSSSIRFMLQPEVKSQVMELAKVLENEDGVAAAVDAFHRHLPPELPLPESSSEKKDEDDRPDLLQWFFIQIGKKCCLPCGGV.

The disordered stretch occupies residues 1–54 (MASNVFDHPLQELEGEDNGVKSEKASLLETSGSVDTTPEDSGHRSSDGHRGLDH). Residues 40–54 (DSGHRSSDGHRGLDH) show a composition bias toward basic and acidic residues.

This sequence belongs to the glycosyltransferase 28 family. In terms of tissue distribution, expressed in developing seeds, seedlings, leaves and around the apical tip of cotyledons. In embryo, expressed in the seed coat and cotyledons.

The catalysed reaction is a sterol + UDP-alpha-D-glucose = a sterol 3-beta-D-glucoside + UDP + H(+). Involved in the biosynthesis of sterol glucosides. Catalyzes the synthesis of steryl glycosides (SGs) and acyl steryl glycosides (ASGs) which are the most abundant sterol derivatives in higher plants. Can act on several sterols like sitosterol, campesterol and stigmasterol. Is required for embryonic development, seed suberin accumulation, cutin formation and flavanoid accumulation in the seed coat. Both UGT80A2 and UGT80B1 are required for the normal production of SGs and ASGs in seeds. This is Sterol 3-beta-glucosyltransferase UGT80B1 from Arabidopsis thaliana (Mouse-ear cress).